A 151-amino-acid polypeptide reads, in one-letter code: Receptor activity-modifying protein 3 (151 aa).

The N-terminal stretch at 1 to 30 is a signal peptide; that stretch reads MEATAPRRRHLLPLLLLLLLLCGECPPVSG. Over 31 to 116 the chain is Extracellular; that stretch reads CNEKRMLAML…CSVDRQQWQD (86 aa). Intrachain disulfides connect C43–C75 and C60–C107. N-linked (GlcNAc...) asparagine glycosylation is found at N61 and N106. Residues 117-141 form a helical membrane-spanning segment; the sequence is PPDEILIPLIVVPILLTLAMTGLVV. The Cytoplasmic segment spans residues 142–151; the sequence is WRSKRAAQVV.

The protein belongs to the RAMP family. As to quaternary structure, heterodimer of CALCRL and RAMP3; interaction induces allosteric modulation of CALCRL function and ligand specificity for adrenomedullin/ADM and intermedin/ADM2. Heterodimer of CALCR and RAMP3; interaction form the receptor complex AMYR3 for amylin/IAPP. Interacts with GPER1.

It is found in the cell membrane. The protein localises to the membrane. In terms of biological role, accessory protein that interacts with and modulates the function of G-protein coupled receptors including calcitonin gene-related peptide type 1 receptor (CALCRL), calcitonin receptor (CALCR) and G-protein coupled estrogen receptor 1 (GPER1). Required for the transport of CALCRL and GPER1 receptors to the plasma membrane. Plays a role in cardioprotection by reducing cardiac hypertrophy and perivascular fibrosis in a GPER1-dependent manner. Together with CALCRL, form a receptor complex for adrenomedullin/ADM and intermedin/ADM2. Together with CALCR, act as a receptor complex for amylin/IAPP. The protein is Receptor activity-modifying protein 3 (RAMP3) of Sus scrofa (Pig).